Consider the following 430-residue polypeptide: Tol-Pal system protein TolB (430 aa).

The signal sequence occupies residues 1 to 21 (MKQALRVAFGFLMLWAAMLHA).

It belongs to the TolB family. As to quaternary structure, the Tol-Pal system is composed of five core proteins: the inner membrane proteins TolA, TolQ and TolR, the periplasmic protein TolB and the outer membrane protein Pal. They form a network linking the inner and outer membranes and the peptidoglycan layer.

It localises to the periplasm. Its function is as follows. Part of the Tol-Pal system, which plays a role in outer membrane invagination during cell division and is important for maintaining outer membrane integrity. TolB occupies a key intermediary position in the Tol-Pal system because it communicates directly with both membrane-embedded components, Pal in the outer membrane and TolA in the inner membrane. This is Tol-Pal system protein TolB from Escherichia fergusonii (strain ATCC 35469 / DSM 13698 / CCUG 18766 / IAM 14443 / JCM 21226 / LMG 7866 / NBRC 102419 / NCTC 12128 / CDC 0568-73).